A 324-amino-acid polypeptide reads, in one-letter code: Ribonucleoside-diphosphate reductase subunit beta nrdF2 (324 aa).

Fe cation contacts are provided by glutamate 103 and histidine 106. Residue tyrosine 110 is part of the active site. Residues glutamate 163, glutamate 197, and histidine 200 each coordinate Fe cation.

It belongs to the ribonucleoside diphosphate reductase small chain family. In terms of assembly, tetramer of two alpha and two beta subunits. Fe cation serves as cofactor.

The catalysed reaction is a 2'-deoxyribonucleoside 5'-diphosphate + [thioredoxin]-disulfide + H2O = a ribonucleoside 5'-diphosphate + [thioredoxin]-dithiol. Its function is as follows. Provides the precursors necessary for DNA synthesis. Catalyzes the biosynthesis of deoxyribonucleotides from the corresponding ribonucleotides. The protein is Ribonucleoside-diphosphate reductase subunit beta nrdF2 (nrdF2) of Mycobacterium tuberculosis (strain CDC 1551 / Oshkosh).